Consider the following 384-residue polypeptide: Heparin lyase I (384 aa).

Residues 1–21 (MKKQILYLIVLQQLFLCSAYA) form the signal peptide. Glutamine 22 bears the Blocked amino end (Gln) mark. Serine 39 is a glycosylation site (O-linked (Man...) serine).

Monomer. The N-terminus is blocked.

The protein resides in the periplasm. The catalysed reaction is Eliminative cleavage of polysaccharides containing (1-&gt;4)-linked D-glucuronate or L-iduronate residues and (1-&gt;4)-alpha-linked 2-sulfoamino-2-deoxy-6-sulfo-D-glucose residues to give oligosaccharides with terminal 4-deoxy-alpha-D-gluc-4-enuronosyl groups at their non-reducing ends.. In terms of biological role, degrades heparin and heparan sulfate. Also implicated in the release of heparin-bound growth factors from the extracellular matrix. The protein is Heparin lyase I of Pedobacter heparinus (Flavobacterium heparinum).